The following is a 1107-amino-acid chain: Lon protease homolog, mitochondrial (1107 aa).

The N-terminal 31 residues, 1-31 (MLSRQRIPRILASRTSLAHSIRSFTSTTSSI), are a transit peptide targeting the mitochondrion. Disordered stretches follow at residues 32–152 (RPVA…PGDK) and 273–329 (PEAA…PYEP). The span at 51-60 (TNLSSFSTYT) shows a compositional bias: polar residues. Over residues 80–101 (EEERKANVEHAEAEAKEAESKQ) the composition is skewed to basic and acidic residues. Positions 122-141 (GAAGGSSAGSGSGADGGSGD) are enriched in gly residues. Residues 142–152 (GGKRGRKPGDK) show a composition bias toward basic and acidic residues. The region spanning 166 to 441 (VMAIPIAKRP…KALLVLKKEH (276 aa)) is the Lon N-terminal domain. 594–601 (GPPGVGKT) is an ATP binding site. Residues 808-858 (PESEALTEEGKAAQEETEKKKSEEAASGETSSPKAATEASEKETTEKPRVA) form a disordered region. Basic and acidic residues predominate over residues 815-831 (EEGKAAQEETEKKKSEE). The segment covering 832–845 (AASGETSSPKAATE) has biased composition (low complexity). The span at 846–856 (ASEKETTEKPR) shows a compositional bias: basic and acidic residues. Positions 891 to 1077 (VTPPGVTMGL…SEVFDLIFPK (187 aa)) constitute a Lon proteolytic domain. Catalysis depends on residues serine 983 and lysine 1026. The interval 1085 to 1107 (KSRIIEDDKSEKEESKKKNDDDE) is disordered.

This sequence belongs to the peptidase S16 family. Homohexamer or homoheptamer. Organized in a ring with a central cavity.

It is found in the mitochondrion matrix. The enzyme catalyses Hydrolysis of proteins in presence of ATP.. ATP-dependent serine protease that mediates the selective degradation of misfolded, unassembled or oxidatively damaged polypeptides as well as certain short-lived regulatory proteins in the mitochondrial matrix. May also have a chaperone function in the assembly of inner membrane protein complexes. Participates in the regulation of mitochondrial gene expression and in the maintenance of the integrity of the mitochondrial genome. Binds to mitochondrial DNA in a site-specific manner. The protein is Lon protease homolog, mitochondrial (pim1) of Neurospora crassa (strain ATCC 24698 / 74-OR23-1A / CBS 708.71 / DSM 1257 / FGSC 987).